A 137-amino-acid chain; its full sequence is Small ribosomal subunit protein uS12 (137 aa).

Positions 1–44 are disordered; sequence MPTINQLVRKGRKSRTSKSDAPALNFGYNSMKKKATDNPAPQKR. 3-methylthioaspartic acid is present on aspartate 102.

Belongs to the universal ribosomal protein uS12 family. In terms of assembly, part of the 30S ribosomal subunit. Contacts proteins S8 and S17. May interact with IF1 in the 30S initiation complex.

With S4 and S5 plays an important role in translational accuracy. In terms of biological role, interacts with and stabilizes bases of the 16S rRNA that are involved in tRNA selection in the A site and with the mRNA backbone. Located at the interface of the 30S and 50S subunits, it traverses the body of the 30S subunit contacting proteins on the other side and probably holding the rRNA structure together. The combined cluster of proteins S8, S12 and S17 appears to hold together the shoulder and platform of the 30S subunit. This chain is Small ribosomal subunit protein uS12, found in Latilactobacillus sakei subsp. sakei (strain 23K) (Lactobacillus sakei subsp. sakei).